The primary structure comprises 93 residues: Protein E7 (93 aa).

An E7 terminal domain region spans residues 1-42 (MRGETPTLKDIVLFDIPTCETPIDLYCYEQLDSSDEDDQAKQ). Residues 25–29 (LYCYE) carry the LXCXE motif; interaction with host RB1 and TMEM173/STING motif. Residues 53 to 89 (CTQCYKSVKLVVQCTEADIRNLQQMLLGTLDIVCPLC) fold into a zinc finger. A Nuclear export signal motif is present at residues 71–79 (IRNLQQMLL).

It belongs to the papillomaviridae E7 protein family. In terms of assembly, homodimer. Homooligomer. Interacts with host RB1; this interaction induces dissociation of RB1-E2F1 complex thereby disrupting RB1 activity. Interacts with host EP300; this interaction represses EP300 transcriptional activity. Interacts with protein E2; this interaction inhibits E7 oncogenic activity. Interacts with host TMEM173/STING; this interaction impairs the ability of TMEM173/STING to sense cytosolic DNA and promote the production of type I interferon (IFN-alpha and IFN-beta). Post-translationally, highly phosphorylated.

Its subcellular location is the host cytoplasm. The protein resides in the host nucleus. Plays a role in viral genome replication by driving entry of quiescent cells into the cell cycle. Stimulation of progression from G1 to S phase allows the virus to efficiently use the cellular DNA replicating machinery to achieve viral genome replication. E7 protein has both transforming and trans-activating activities. Induces the disassembly of the E2F1 transcription factor from RB1, with subsequent transcriptional activation of E2F1-regulated S-phase genes. Interferes with host histone deacetylation mediated by HDAC1 and HDAC2, leading to transcription activation. Also plays a role in the inhibition of both antiviral and antiproliferative functions of host interferon alpha. Interaction with host TMEM173/STING impairs the ability of TMEM173/STING to sense cytosolic DNA and promote the production of type I interferon (IFN-alpha and IFN-beta). This chain is Protein E7, found in Human papillomavirus 42.